The following is a 295-amino-acid chain: MTSLTLPDIAAQKHQHATPLAWVGMCGIALPVHFDGRSVAAMADAGVSLEDGSSRGIHMSRLYLSLERLERQSLTPLAIRQILADFLASHEGLSHAAYLRLTFDHLLKRPALVSPLAGWKSYSITVDAKIENGMFHVELSVRVPYSSTCPCSAALARQLIQQQFQADFSGQAINREAVLEWLGSSHGIVATPHSQRSLAEVNVRLGDRLEVLPVTELIDRIEASLGTAVQTAVKRADEQAFALANGQNLMFCEDAARRLHQALQQMDWAKAFKLRVEHAESLHAHDAVAASQWQW.

This sequence belongs to the GTP cyclohydrolase IV family.

The enzyme catalyses GTP + H2O = 7,8-dihydroneopterin 3'-triphosphate + formate + H(+). It participates in cofactor biosynthesis; 7,8-dihydroneopterin triphosphate biosynthesis; 7,8-dihydroneopterin triphosphate from GTP: step 1/1. Its function is as follows. Converts GTP to 7,8-dihydroneopterin triphosphate. The sequence is that of GTP cyclohydrolase FolE2 from Pseudomonas putida (strain W619).